The chain runs to 1124 residues: MEGWGEISRIAATASSSVIDNSKITSLQFDNQQNLLWCGDSKGTTRSFTPQSTSIPMPYPALHLSQYSKFKTSLGTSPVKQYLNHQKGILSLSHNCVNFNNRRGLTQLSLNSESLKEPGFNNLSCMTFNSNTNNDLVIAGDSLFKVDLLKPNMTTSFNHTGKVSMIDNTLNYLTLGKSNGEIEIFDPVSNQTVKSFYGHNGLLSDIDVQGNYVASCGYSLRPRRNQASQSSYMIDPLVNIYDLRMMRSLPPIPFSAGASFVKFHPKLPNIMIIASSLGQLQFVDIYDQSNVYLYQADLSNVNASTPTTSSNTYLANLEVSGNGEFITFSDGFQNLHLWSFKNNNSKNFINFPSYLEQPDFSPPFQQNHINVDDVVPLSSIGMPYYKDLLLSNYASDLHFTKELSKLPNHLDPELLQNQYSQVLPYNTLKYGKRNLNKFYVPLQNNVSTKQKLFPKFISEKNGHDSFDNENSNIFEYKLSNKFEVPNCYSNLKIQYSKFGVEDFDFSFYNRTKYSGLENHLDNSYINSLLQLYKYSPVFQNFIIKHLLKEWLPNDLTTIIQNGNPQGSSILNELGYIFDMMNKSHGKNCKTSNFSNVLSQNQVAQMQELINKDDCKNLNAFEIRAIIGKFNKFLLSTCNNDLLNQFNTSLSEITNIGYEIEIKSNGCNINNVNYNSQLTVDLMSPPINKLSILISANSTSATKKNLNILNYLDYSMNQFKTIKCQQCNNSFPHLLEIRQSLVHLPPVISINVNFTGQEFNLIQNFPNWLVPEFYTYGMNNKVSFKLHSNDNLSNKYELLGYVCEINVGSEFLKGKHNLVSYIKIESKWYLFNDFLVMPIPESEVFDLSYHWKKPIIVMYQLANHADFGSFQQQSFAQLPDLNDSILYRDHFAGGIRDSIKREYELLTKDEAPNAGTLIAIDAEFVALNPEELEVHYGGVRNLIKPRNLSLARISVLRGDNGPKQGVPFIDDYIIHTCFIDDYLTSFSGIEPGDLDPSSSTKTLTTLQTSYRKLWLLLNLGCIFVGHGLQNDFRCINLHVPKNQIRDTADFFYLPELKRKLSLKFLAYILLKEKVQTGNHDSIEDANTALLLYKKYLELTAIGEFESTLHRIYMDGQQLRFRVPDS.

WD repeat units lie at residues 19–58 (IDNSKITSLQFDNQQNLLWCGDSKGTTRSFTPQSTSIPMP), 118–157 (PGFNNLSCMTFNSNTNNDLVIAGDSLFKVDLLKPNMTTSF), 158–195 (NHTGKVSMIDNTLNYLTLGKSNGEIEIFDPVSNQTVKS), and 309–348 (SSNTYLANLEVSGNGEFITFSDGFQNLHLWSFKNNNSKNF). Residues 351–484 (FPSYLEQPDF…EYKLSNKFEV (134 aa)) are linker. The region spanning 484 to 861 (VPNCYSNLKI…KPIIVMYQLA (378 aa)) is the USP domain. The Exonuclease domain maps to 917-1091 (IAIDAEFVAL…EDANTALLLY (175 aa)). A divalent metal cation contacts are provided by D920, E922, D1030, and D1083.

This sequence belongs to the peptidase C19 family. PAN2 subfamily. As to quaternary structure, forms a heterotrimer with an asymmetric homodimer of the regulatory subunit PAN3 to form the poly(A)-nuclease (PAN) deadenylation complex. It depends on a divalent metal cation as a cofactor.

The protein resides in the cytoplasm. The catalysed reaction is Exonucleolytic cleavage of poly(A) to 5'-AMP.. With respect to regulation, positively regulated by the regulatory subunit PAN3. Functionally, catalytic subunit of the poly(A)-nuclease (PAN) deadenylation complex, one of two cytoplasmic mRNA deadenylases involved in mRNA turnover. PAN specifically shortens poly(A) tails of RNA and the activity is stimulated by poly(A)-binding protein PAB1. PAN deadenylation is followed by rapid degradation of the shortened mRNA tails by the CCR4-NOT complex. Deadenylated mRNAs are then degraded by two alternative mechanisms, namely exosome-mediated 3'-5' exonucleolytic degradation, or deadenylation-dependent mRNA decaping and subsequent 5'-3' exonucleolytic degradation by XRN1. May also be involved in post-transcriptional maturation of mRNA poly(A) tails. This chain is PAN2-PAN3 deadenylation complex catalytic subunit PAN2, found in Debaryomyces hansenii (strain ATCC 36239 / CBS 767 / BCRC 21394 / JCM 1990 / NBRC 0083 / IGC 2968) (Yeast).